The following is a 155-amino-acid chain: Ribosomal RNA large subunit methyltransferase H (155 aa).

S-adenosyl-L-methionine is bound by residues L72, G103, and 122-127; that span reads LSALTL.

It belongs to the RNA methyltransferase RlmH family. In terms of assembly, homodimer.

It localises to the cytoplasm. The enzyme catalyses pseudouridine(1915) in 23S rRNA + S-adenosyl-L-methionine = N(3)-methylpseudouridine(1915) in 23S rRNA + S-adenosyl-L-homocysteine + H(+). Specifically methylates the pseudouridine at position 1915 (m3Psi1915) in 23S rRNA. This is Ribosomal RNA large subunit methyltransferase H from Enterobacter sp. (strain 638).